The chain runs to 151 residues: Deoxyuridine 5'-triphosphate nucleotidohydrolase (151 aa).

Residues 70–72 (RSG), Asn-83, 87–89 (LID), and Met-97 contribute to the substrate site.

This sequence belongs to the dUTPase family. Requires Mg(2+) as cofactor.

It catalyses the reaction dUTP + H2O = dUMP + diphosphate + H(+). The protein operates within pyrimidine metabolism; dUMP biosynthesis; dUMP from dCTP (dUTP route): step 2/2. In terms of biological role, this enzyme is involved in nucleotide metabolism: it produces dUMP, the immediate precursor of thymidine nucleotides and it decreases the intracellular concentration of dUTP so that uracil cannot be incorporated into DNA. This Shigella flexneri serotype 5b (strain 8401) protein is Deoxyuridine 5'-triphosphate nucleotidohydrolase.